The following is a 176-amino-acid chain: Large ribosomal subunit protein bL12m (176 aa).

Belongs to the bacterial ribosomal protein bL12 family. Component of the mitochondrial large ribosomal subunit (mt-LSU). Mature N.crassa 74S mitochondrial ribosomes consist of a small (37S) and a large (54S) subunit. The 37S small subunit contains a 16S ribosomal RNA (16S mt-rRNA) and 32 different proteins. The 54S large subunit contains a 23S rRNA (23S mt-rRNA) and 42 different proteins.

The protein localises to the mitochondrion. In terms of biological role, component of the mitochondrial ribosome (mitoribosome), a dedicated translation machinery responsible for the synthesis of mitochondrial genome-encoded proteins, including at least some of the essential transmembrane subunits of the mitochondrial respiratory chain. The mitoribosomes are attached to the mitochondrial inner membrane and translation products are cotranslationally integrated into the membrane. The sequence is that of Large ribosomal subunit protein bL12m (mrpl12) from Neurospora crassa (strain ATCC 24698 / 74-OR23-1A / CBS 708.71 / DSM 1257 / FGSC 987).